A 655-amino-acid polypeptide reads, in one-letter code: MAPGEKIKAKIKKNLPVRGPQAPTIKDLMHWYCLNTNTHGCRRIVVSRGRLRRLLWIAFTLTAVALIIWQCALLVFSFYTVSVSIKVHFQKLDFPAVTICNINPYKYSAVSDLLTDLDSETKQALLSLYGVKDVLDSTPRKRREAGSMRSTWEGTPPRFLNLIPLLVFNENEKGKARDFFTGRKRKISGKIIHKASNVMHVHESKKLVGFQLCSNDTSDCATYTFSSGINAIQEWYKLHYMNIMAQVPLEKKINMSYSAEELLVTCFFDGMSCDARNFTLFHHPMYGNCYTFNNRENATILSTSMGGSEYGLQVILYINEDEYNPFLVSSTGAKVLVHQQNEYPFIEDVGTEIETAMSTSIGMHLTESFKLSEPYSQCTEDGSDVPVTNIYNAAYSLQICLYSCFQTKMVEKCGCAQYSQPLPPAANYCNYQQHPNWMYCYYQLYQAFVREELGCQSVCKQSCSFKEWTLTTSLAQWPSEASEKWLLNVLTWDQSQQINKKLNKTDLAKLLIFYKDLNQRSIMESPANSIEMLLSNFGGQLGLWMSCSVVCVIEIIEVFFIDFFSIIARRQWQKAKDWWARRRTPPSTETPSSQQGQDNPALDTDDDLPTFTSAMRLPPAPEAPVPGTPPPRYNTLRLDSAFSSQLTDTQLTNEF.

Residues 1–55 (MAPGEKIKAKIKKNLPVRGPQAPTIKDLMHWYCLNTNTHGCRRIVVSRGRLRRLL) are Cytoplasmic-facing. Residues 56–76 (WIAFTLTAVALIIWQCALLVF) traverse the membrane as a helical segment. At 77-547 (SFYTVSVSIK…GGQLGLWMSC (471 aa)) the chain is on the extracellular side. 8 disulfide bridges follow: C100–C289, C213–C220, C266–C273, C378–C463, C400–C459, C404–C455, C413–C440, and C415–C429. The gating release of inhibition by proteolysis (GRIP); protease-sensitive region that is responsible for the proteolytic activation of the channel stretch occupies residues 140-227 (RKRREAGSMR…SDCATYTFSS (88 aa)). The N-linked (GlcNAc...) asparagine glycan is linked to N215. N-linked (GlcNAc...) asparagine glycosylation occurs at N277. Residue N503 is glycosylated (N-linked (GlcNAc...) asparagine). Residues 548–568 (SVVCVIEIIEVFFIDFFSIIA) form a helical membrane-spanning segment. The Cytoplasmic portion of the chain corresponds to 569–655 (RRQWQKAKDW…LTDTQLTNEF (87 aa)). The interval 582 to 636 (RRTPPSTETPSSQQGQDNPALDTDDDLPTFTSAMRLPPAPEAPVPGTPPPRYNTL) is disordered. Over residues 585 to 598 (PPSTETPSSQQGQD) the composition is skewed to polar residues. Residues 618 to 632 (PPAPEAPVPGTPPPR) are compositionally biased toward pro residues. The PY motif; recruits WW domain-containing proteins and is thereby required for ubiquitination and inhibition of the channel by NEDD4 and NEDD4L signature appears at 629–633 (PPPRY).

Belongs to the amiloride-sensitive sodium channel (TC 1.A.6) family. SCNN1G subfamily. Component of the heterotrimeric epithelial sodium channel (ENaC) composed of an alpha/SCNN1A, a beta/SCNN1B and a gamma/SCNN1G subunit. Interacts with WWP1 (via WW domains). Interacts with WWP2 (via WW domains); inhibits the channel. Interacts with the full-length immature form of PCSK9 (pro-PCSK9); inhibits ENaC by promoting its proteasomal degradation. Interacts with BPIFA1; the interaction is indirect via SCNN1B and inhibits the proteolytic maturation of SCNN1A and SCNN1G and the activation of ENaC. Post-translationally, phosphorylated on serine and threonine residues. Aldosterone and insulin increase the basal level of phosphorylation. Ubiquitinated. Can be ubiquitinated at multiple sites and undergo monoubiquitination and polyubiquitination. Ubiquitination by NEDD4 or NEDD4L inhibits the ENaC channel through endocytosis, intracellular retention and degradation of its individual subunits. In terms of processing, ENaC is activated through the proteolytic maturation of its subunits. Furin cleaves the SCNN1G subunit first, followed by cleavage by prostasin (PRSS8), which results in a stepwise increase in the open probability of the channel due to the release of an inhibitory tract. BPIFA1, which is recruited by the SCNN1B subunit, prevents the proteolytic activation of ENaC. Post-translationally, N-glycosylated. N-linked glycans are processed to complex type during ENaC complex assembly and transport to the plasma membrane. In terms of tissue distribution, lung and kidney.

The protein localises to the apical cell membrane. The catalysed reaction is Na(+)(in) = Na(+)(out). With respect to regulation, originally identified and characterized by its inhibition by the diuretic drug amiloride. In terms of biological role, this is one of the three pore-forming subunits of the heterotrimeric epithelial sodium channel (ENaC), a critical regulator of sodium balance and fluid homeostasis. ENaC operates in epithelial tissues, where it mediates the electrodiffusion of sodium ions from extracellular fluid through the apical membrane of cells, with water following osmotically. It plays a key role in maintaining sodium homeostasis through electrogenic sodium reabsorption in the kidneys. Additionally, ENaC is essential for airway surface liquid homeostasis, which is crucial for proper mucus clearance. This is Epithelial sodium channel subunit gamma from Mus musculus (Mouse).